The sequence spans 324 residues: Elongation factor Ts, mitochondrial (324 aa).

The transit peptide at 1–44 (MSLLRSLRFFPVACTGRSARAVLLQPSQPWLTFHAGPSLSSAAS) directs the protein to the mitochondrion. 3 positions are modified to N6-succinyllysine: lysine 75, lysine 132, and lysine 191. Residue serine 269 is modified to Phosphoserine.

Belongs to the EF-Ts family.

The protein localises to the mitochondrion. Functionally, associates with the EF-Tu.GDP complex and induces the exchange of GDP to GTP. It remains bound to the aminoacyl-tRNA.EF-Tu.GTP complex up to the GTP hydrolysis stage on the ribosome. This chain is Elongation factor Ts, mitochondrial (Tsfm), found in Mus musculus (Mouse).